A 188-amino-acid chain; its full sequence is Elongation factor P (188 aa).

It belongs to the elongation factor P family.

The protein localises to the cytoplasm. It functions in the pathway protein biosynthesis; polypeptide chain elongation. In terms of biological role, involved in peptide bond synthesis. Stimulates efficient translation and peptide-bond synthesis on native or reconstituted 70S ribosomes in vitro. Probably functions indirectly by altering the affinity of the ribosome for aminoacyl-tRNA, thus increasing their reactivity as acceptors for peptidyl transferase. This is Elongation factor P from Flavobacterium johnsoniae (strain ATCC 17061 / DSM 2064 / JCM 8514 / BCRC 14874 / CCUG 350202 / NBRC 14942 / NCIMB 11054 / UW101) (Cytophaga johnsonae).